Consider the following 218-residue polypeptide: Ras-related protein YPT3 (218 aa).

20–27 lines the GTP pocket; that stretch reads GDSGVGKS. An Effector region motif is present at residues 42 to 50; that stretch reads SKSTIGVEF. Residues 68–72 and 126–129 each bind GTP; these read DTAGQ and NKSD. Residues 186-205 are disordered; it reads GDEGATSSAPPKGETINIKD. 2 S-geranylgeranyl cysteine lipidation sites follow: Cys-215 and Cys-216.

This sequence belongs to the small GTPase superfamily. Rab family. Its expression is weak in leaves, higher in stems and roots, but highest in petals, stigma and stamens.

Its subcellular location is the cell membrane. Its function is as follows. Protein transport. Probably involved in vesicular traffic. In Nicotiana plumbaginifolia (Leadwort-leaved tobacco), this protein is Ras-related protein YPT3 (YPT3).